A 1250-amino-acid polypeptide reads, in one-letter code: Protein suppressor of variegation 3-7 (1250 aa).

Disordered regions lie at residues 107–148 and 160–186; these read LNNP…HSYH and HDPG…GGMR. Residues 132-141 are compositionally biased toward polar residues; sequence STKTEPSSDA. Residues 164-175 are compositionally biased toward acidic residues; the sequence is DSQDDDDEDDES. Phosphoserine occurs at positions 165, 175, and 176. C2H2-type zinc fingers lie at residues 217 to 236, 319 to 343, 425 to 446, and 487 to 512; these read CLYC…IQQH, CRIC…TKGH, CTLC…TRAH, and CSVC…SEKH. Residues 343–354 show a composition bias toward basic and acidic residues; sequence HMEALRNLDSDK. A disordered region spans residues 343-398; it reads HMEALRNLDSDKRSRKRKRSKSNSVTNSGGDEAEREKESEPEVGPEDAQDTPVVMM. Positions 525–564 are disordered; the sequence is VGSADGRGGDNMDEEEAAASDQAQSSQTDDSEDNDDDNWS. Positions 543–552 are enriched in low complexity; that stretch reads ASDQAQSSQT. Residues 553–563 show a composition bias toward acidic residues; the sequence is DDSEDNDDDNW. The C2H2-type 5 zinc finger occupies 605–629; it reads QICKFCRVRFHNEAAKARHELSARH. The interval 642–684 is disordered; it reads KLHQGTNTQTKHNAQDDEESQEQDEEYGEEEEDAEEDSQSNFD. Acidic residues predominate over residues 657-679; it reads DDEESQEQDEEYGEEEEDAEEDS. 2 C2H2-type zinc fingers span residues 737 to 761 and 829 to 852; these read CKLC…TSRH and CRVC…SRKH. Residues 851–860 are compositionally biased toward basic and acidic residues; it reads KHVENKERQR. The interval 851–915 is disordered; the sequence is KHVENKERQR…PLAKRSRRSM (65 aa). Residues Ser-871 and Ser-873 each carry the phosphoserine modification. Positions 879 to 897 are enriched in basic and acidic residues; sequence DAERQESGMDKESENDMSV. Ser-975 is subject to Phosphoserine. Residues 987–1026 enclose the BESS domain; the sequence is RHVMDLFFDSISPTMKSLPPDLAAEGKSKIMQLVCSLELR. The segment covering 1032-1055 has biased composition (low complexity); it reads ATTPTPATVSASSKWPSSTTVTPV. 4 disordered regions span residues 1032 to 1060, 1079 to 1116, 1154 to 1180, and 1205 to 1236; these read ATTP…TPPA, TTPH…NGSA, QSRT…ADLS, and NTPQ…NGCQ. Composition is skewed to polar residues over residues 1079-1091 and 1104-1114; these read TTPH…QNNN and GASSAQVTING. Low complexity predominate over residues 1206-1224; sequence TPQMQQPQQAQASITSSTP.

As to quaternary structure, interacts with Su(var)39 through the BESS domain.

It localises to the nucleus. Functionally, dose-limiting factor in position-effect variegation, the inactivation in some cells of a gene translocated next to heterochromatin. It could play a role in chromosome condensation. The sequence is that of Protein suppressor of variegation 3-7 (Su(var)3-7) from Drosophila melanogaster (Fruit fly).